The following is an 831-amino-acid chain: Periplasmic nitrate reductase (831 aa).

Positions 1–29 (MKISRRDFIKQTAITATASVAGVTLPAGA) form a signal peptide, tat-type signal. Positions 41–97 (LKWSKAPCRFCGTGCGVTVAVKDNKVVATQGDPQAEVNKGLNCVKGYFLSKIMYGQD) constitute a 4Fe-4S Mo/W bis-MGD-type domain. Residues Cys-48, Cys-51, Cys-55, and Cys-83 each coordinate [4Fe-4S] cluster. Mo-bis(molybdopterin guanine dinucleotide) contacts are provided by residues Lys-85, Gln-152, Asn-177, Cys-181, 214–221 (WGSNMAEM), 245–249 (STFTH), 264–266 (QTD), Met-375, Gln-379, Asn-485, 511–512 (SD), Lys-534, Asp-561, and 721–730 (TGRVLEHWHS). Position 797 (Trp-797) interacts with substrate. Positions 805 and 822 each coordinate Mo-bis(molybdopterin guanine dinucleotide).

It belongs to the prokaryotic molybdopterin-containing oxidoreductase family. NasA/NapA/NarB subfamily. In terms of assembly, component of the periplasmic nitrate reductase NapAB complex composed of NapA and NapB. [4Fe-4S] cluster is required as a cofactor. Mo-bis(molybdopterin guanine dinucleotide) serves as cofactor. Predicted to be exported by the Tat system. The position of the signal peptide cleavage has been experimentally proven.

The protein localises to the periplasm. The catalysed reaction is 2 Fe(II)-[cytochrome] + nitrate + 2 H(+) = 2 Fe(III)-[cytochrome] + nitrite + H2O. Functionally, catalytic subunit of the periplasmic nitrate reductase complex NapAB. Receives electrons from NapB and catalyzes the reduction of nitrate to nitrite. This chain is Periplasmic nitrate reductase, found in Cupriavidus necator (strain ATCC 17699 / DSM 428 / KCTC 22496 / NCIMB 10442 / H16 / Stanier 337) (Ralstonia eutropha).